The following is a 313-amino-acid chain: Intelectin-like protein (313 aa).

The Fibrinogen C-terminal domain maps to 33 to 251 (TSCCSQTSPG…NNEKAPMALC (219 aa)). H86, E87, N89, G92, G97, D98, and D133 together coordinate Ca(2+). 3 disulfide bridges follow: C94/C280, C199/C259, and C251/C265. Ca(2+) is bound by residues N260, E262, E274, and D282. A carbohydrate-binding positions include 262-263 (EH) and E274.

As to quaternary structure, monomer, homodimer, homotrimer and homotetramer. Mostly monomeric or dimeric.

Its subcellular location is the secreted. Functionally, binds mannan, mannose and, to a lesser degree, D-lactose, N-acetylgalactosamine, N-acetylglucosamine and beta-D-glucose. This chain is Intelectin-like protein, found in Alligator mississippiensis (American alligator).